Reading from the N-terminus, the 65-residue chain is Chymotrypsin/elastase isoinhibitors 2 to 5 (65 aa).

Cystine bridges form between Cys-4/Cys-37, Cys-13/Cys-32, Cys-16/Cys-28, Cys-20/Cys-59, and Cys-39/Cys-53. Residues Cys-4–Cys-59 enclose the TIL domain.

The protein belongs to the serine protease inhibitor-like (TIL domain-containing) family.

It localises to the secreted. Functionally, defends the organism against the host's proteinases. This chain is Chymotrypsin/elastase isoinhibitors 2 to 5, found in Ascaris suum (Pig roundworm).